Consider the following 410-residue polypeptide: Scarecrow-like protein 32 (410 aa).

Positions 18-408 (LRGCGDANFM…HSVVFATVWV (391 aa)) constitute a GRAS domain. Residues 25–88 (NFMEQLLLHC…AVSKTPTLSS (64 aa)) are leucine repeat I (LRI). Positions 107–188 (LAAFVDLTPW…HFPPFINISY (82 aa)) are VHIID. Positions 138–142 (VHIVD) match the VHIID motif. A leucine repeat II (LRII) region spans residues 190–227 (ELGSKLVNFATTRNITMEFTIVPSTYSDGFSSLLQQLR). The segment at 237–329 (LVVNCHMMLR…EAEISWKIEN (93 aa)) is PFYRE. The tract at residues 332 to 408 (AKEGAERVER…HSVVFATVWV (77 aa)) is SAW.

Belongs to the GRAS family. Expressed in seedlings, leaves and flowers.

The protein localises to the nucleus. Probable transcription factor involved in plant development. The sequence is that of Scarecrow-like protein 32 (SCL32) from Arabidopsis thaliana (Mouse-ear cress).